Reading from the N-terminus, the 435-residue chain is ATP-dependent protease ATPase subunit HslU (435 aa).

Residues I18, G60–E65, D248, E313, and R385 contribute to the ATP site.

This sequence belongs to the ClpX chaperone family. HslU subfamily. In terms of assembly, a double ring-shaped homohexamer of HslV is capped on each side by a ring-shaped HslU homohexamer. The assembly of the HslU/HslV complex is dependent on binding of ATP.

Its subcellular location is the cytoplasm. Functionally, ATPase subunit of a proteasome-like degradation complex; this subunit has chaperone activity. The binding of ATP and its subsequent hydrolysis by HslU are essential for unfolding of protein substrates subsequently hydrolyzed by HslV. HslU recognizes the N-terminal part of its protein substrates and unfolds these before they are guided to HslV for hydrolysis. This Rhizobium leguminosarum bv. trifolii (strain WSM2304) protein is ATP-dependent protease ATPase subunit HslU.